A 65-amino-acid polypeptide reads, in one-letter code: KEGYPMGRDGCKISCVINNNFCKVECQAKWRQSDGYCYFWGLSCYCTNLPEDAQVWDSSTNKCGG.

The 64-residue stretch at 1-64 folds into the LCN-type CS-alpha/beta domain; that stretch reads KEGYPMGRDG…VWDSSTNKCG (64 aa). Disulfide bonds link cysteine 11-cysteine 63, cysteine 15-cysteine 37, cysteine 22-cysteine 44, and cysteine 26-cysteine 46.

The protein belongs to the long (4 C-C) scorpion toxin superfamily. Sodium channel inhibitor family. Beta subfamily. In terms of tissue distribution, expressed by the venom gland.

Its subcellular location is the secreted. Beta toxins bind voltage-independently at site-4 of sodium channels (Nav) and shift the voltage of activation toward more negative potentials thereby affecting sodium channel activation and promoting spontaneous and repetitive firing. The chain is Putative beta-neurotoxin RjAa2 from Rhopalurus junceus (Caribbean blue scorpion).